Reading from the N-terminus, the 159-residue chain is Ribosome maturation factor RimP (159 aa).

The protein belongs to the RimP family.

Its subcellular location is the cytoplasm. In terms of biological role, required for maturation of 30S ribosomal subunits. The protein is Ribosome maturation factor RimP of Streptococcus pneumoniae serotype 19F (strain G54).